The sequence spans 443 residues: Spermidine hydroxycinnamoyltransferase 1 (443 aa).

Catalysis depends on proton acceptor residues histidine 167 and aspartate 390.

Belongs to the plant acyltransferase family.

In terms of biological role, hydroxycinnamoyl transferase that catalyzes the transfer of an acyl from p-coumaryol-CoA to spermidine, to produce coumaroyl spermidine. Can use feruloyl-CoA as acyl donor. Contributes to the natural variation of spermidine-based phenolamides in rice cultivars. The sequence is that of Spermidine hydroxycinnamoyltransferase 1 from Oryza sativa subsp. japonica (Rice).